The primary structure comprises 204 residues: Methylthioribulose-1-phosphate dehydratase (204 aa).

Zn(2+)-binding residues include histidine 94 and histidine 96.

It belongs to the aldolase class II family. MtnB subfamily. Zn(2+) is required as a cofactor.

It carries out the reaction 5-(methylsulfanyl)-D-ribulose 1-phosphate = 5-methylsulfanyl-2,3-dioxopentyl phosphate + H2O. The protein operates within amino-acid biosynthesis; L-methionine biosynthesis via salvage pathway; L-methionine from S-methyl-5-thio-alpha-D-ribose 1-phosphate: step 2/6. Catalyzes the dehydration of methylthioribulose-1-phosphate (MTRu-1-P) into 2,3-diketo-5-methylthiopentyl-1-phosphate (DK-MTP-1-P). The protein is Methylthioribulose-1-phosphate dehydratase of Pseudomonas syringae pv. tomato (strain ATCC BAA-871 / DC3000).